Reading from the N-terminus, the 455-residue chain is MSINDVTIDTSTYYSILGVPTNASTNEIRKSYMKLAKKLHPDKTKSEHTAELFKLVVDAHSILNNDQLRAEYDKKLILEGRFELHQHGAKQKNKDIRKGYTFKRNSKPYEQQPYGFGVQVPKGPHEESNYEANSNPHNENSSNNDTKMKSTNLHDTLSKDSEDKHGTDDASDIQPPTKSNDIANEVGSKRKSNSKDIHQDHSSNIGLNPLKKKKLEKKAVHATTTESRRYMRKKSEKKATPPIQPLADLQINDDWEKLREVLQRIEKEDSRGGKEFTLDIDVNEQMYNLSMESSDDEHTIPTKKRAKVGSNIQGNSRYFAQTAAYDMNQINANLGTRNTEDDRQASSKISITEIDDILDLLKERVPSPPKLGHLGVQRDQQNRALEYIKYTDELKKRILYVLSNSSTTEAMQHFNRHTQSVLAHKTMELRLCEKLTEIQKCQQGVIEYFSRTALG.

The J domain maps to 12–76; it reads TYYSILGVPT…QLRAEYDKKL (65 aa). The segment at 104-241 is disordered; the sequence is RNSKPYEQQP…RKKSEKKATP (138 aa). Low complexity predominate over residues 133-144; it reads NSNPHNENSSNN. Basic and acidic residues predominate over residues 156–168; the sequence is TLSKDSEDKHGTD.

It is found in the cytoplasm. Its subcellular location is the nucleus. In Candida glabrata (strain ATCC 2001 / BCRC 20586 / JCM 3761 / NBRC 0622 / NRRL Y-65 / CBS 138) (Yeast), this protein is J protein JJJ2 (JJJ2).